We begin with the raw amino-acid sequence, 190 residues long: UPF0301 protein RSc0675 (190 aa).

It belongs to the UPF0301 (AlgH) family.

This Ralstonia nicotianae (strain ATCC BAA-1114 / GMI1000) (Ralstonia solanacearum) protein is UPF0301 protein RSc0675.